The sequence spans 99 residues: Integration host factor subunit alpha (99 aa).

Positions 52-73 (FGNFTLRDKPQRPGRNPKTGEE) are disordered.

The protein belongs to the bacterial histone-like protein family. As to quaternary structure, heterodimer of an alpha and a beta chain.

This protein is one of the two subunits of integration host factor, a specific DNA-binding protein that functions in genetic recombination as well as in transcriptional and translational control. The chain is Integration host factor subunit alpha from Legionella pneumophila subsp. pneumophila (strain Philadelphia 1 / ATCC 33152 / DSM 7513).